The following is a 224-amino-acid chain: Germin-like protein 8-8 (224 aa).

Positions 1-22 are cleaved as a signal peptide; that stretch reads MASPSFCLLAALLALVSWQAIA. Cysteines 32 and 47 form a disulfide. One can recognise a Cupin type-1 domain in the interval 62 to 212; it reads AMLDTPRKTN…AFQVEKGTID (151 aa). Asn-76 is a glycosylation site (N-linked (GlcNAc...) asparagine). Mn(2+)-binding residues include His-109, His-111, and Glu-116. The N-linked (GlcNAc...) asparagine glycan is linked to Asn-135. Residue His-157 coordinates Mn(2+).

This sequence belongs to the germin family. In terms of assembly, oligomer (believed to be a pentamer but probably hexamer).

It localises to the secreted. The protein localises to the extracellular space. Its subcellular location is the apoplast. In terms of biological role, plays a role in broad-spectrum disease resistance. Probably has no oxalate oxidase activity even if the active site is conserved. The sequence is that of Germin-like protein 8-8 from Oryza sativa subsp. japonica (Rice).